Reading from the N-terminus, the 720-residue chain is Neurochondrin (720 aa).

Belongs to the neurochondrin family.

It is found in the cytoplasm. The protein localises to the cytosol. It localises to the cell projection. Its subcellular location is the dendrite. The protein resides in the postsynapse. Functionally, probably involved in signal transduction, in the nervous system. Required for the spatial learning process. May also be involved in neurite outgrowth. The chain is Neurochondrin (ncdn) from Xenopus laevis (African clawed frog).